A 796-amino-acid polypeptide reads, in one-letter code: YY1-associated protein 1 (796 aa).

Disordered regions lie at residues 1–45 and 463–488; these read MEEE…ATPS and IQPS…SEAP. The segment covering 23–36 has biased composition (basic and acidic residues); sequence PPDKREGSAVDPGK. The segment covering 463–472 has biased composition (low complexity); the sequence is IQPSPSLQPS. A compositionally biased stretch (polar residues) spans 473-485; sequence FNPGKTPAQSTHS. Ser724 carries the phosphoserine modification. Positions 755-776 are disordered; the sequence is RQALEPLPQGIQESLNNSSPGD. The segment covering 765 to 774 has biased composition (polar residues); that stretch reads IQESLNNSSP.

As to quaternary structure, interacts with YY1. Interacts with MAD2L2. Interacts with INO80. Ubiquitous. Detected in small intestine, skeletal muscle, lung, pancreas, brain, stomach, spleen, colon and heart. Detected at very low levels in healthy liver. Highly expressed in most liver carcinomas.

The protein localises to the cytoplasm. The protein resides in the nucleus. It localises to the nucleoplasm. It is found in the nucleolus. Associates with the INO80 chromatin remodeling complex, which is responsible for transcriptional regulation, DNA repair, and replication. Enhances transcription activation by YY1. Plays a role in cell cycle regulation. This Homo sapiens (Human) protein is YY1-associated protein 1.